A 487-amino-acid chain; its full sequence is Cytochrome P450 2C16 (487 aa).

Cysteine 432 contacts heme.

It belongs to the cytochrome P450 family. Heme serves as cofactor. As to expression, expressed constitutively in liver, lung, testes, and kidney.

Its subcellular location is the endoplasmic reticulum membrane. It is found in the microsome membrane. The enzyme catalyses an organic molecule + reduced [NADPH--hemoprotein reductase] + O2 = an alcohol + oxidized [NADPH--hemoprotein reductase] + H2O + H(+). Its function is as follows. Cytochromes P450 are a group of heme-thiolate monooxygenases. In liver microsomes, this enzyme is involved in an NADPH-dependent electron transport pathway. It oxidizes a variety of structurally unrelated compounds, including steroids, fatty acids, and xenobiotics. This is Cytochrome P450 2C16 (CYP2C16) from Oryctolagus cuniculus (Rabbit).